A 256-amino-acid chain; its full sequence is MNLDALQQRLGYRFSKPELLQQALTHRSHSAQHNERLEFLGDSVLNCAVADMLYGMFGKLDEGDLSRVRANLVKQQALYEIAQMLQLSDTLRLGEGELKSGGFRRPSILADALEAIVGAVFLDAGFDAARALIRKLYIPILEQVDPRTLGKDAKTLLQEYLQGHKIALPQYNVIATHGAAHSQQFEVECTVPKLEVRVFGTGASRRAAEQAAAKLALDEVQKLVPQLLKRSRAERTGKTRKQPQPQDPQLSLRLKE.

An RNase III domain is found at 3–125 (LDALQQRLGY…IVGAVFLDAG (123 aa)). Glu38 serves as a coordination point for Mg(2+). Residue Asp42 is part of the active site. The Mg(2+) site is built by Asp111 and Glu114. Glu114 is an active-site residue. In terms of domain architecture, DRBM spans 152–222 (DAKTLLQEYL…AKLALDEVQK (71 aa)). Positions 229-256 (KRSRAERTGKTRKQPQPQDPQLSLRLKE) are disordered.

This sequence belongs to the ribonuclease III family. In terms of assembly, homodimer. It depends on Mg(2+) as a cofactor.

The protein localises to the cytoplasm. It catalyses the reaction Endonucleolytic cleavage to 5'-phosphomonoester.. Its function is as follows. Digests double-stranded RNA. Involved in the processing of primary rRNA transcript to yield the immediate precursors to the large and small rRNAs (23S and 16S). Processes some mRNAs, and tRNAs when they are encoded in the rRNA operon. Processes pre-crRNA and tracrRNA of type II CRISPR loci if present in the organism. The chain is Ribonuclease 3 from Cupriavidus taiwanensis (strain DSM 17343 / BCRC 17206 / CCUG 44338 / CIP 107171 / LMG 19424 / R1) (Ralstonia taiwanensis (strain LMG 19424)).